The sequence spans 199 residues: dITP/XTP pyrophosphatase (199 aa).

8–13 contributes to the substrate binding site; the sequence is SGNAGK. The Proton acceptor role is filled by Asp-69. Asp-69 serves as a coordination point for Mg(2+). Substrate-binding positions include Ser-70, 154-157, Lys-177, and 182-183; these read FGYN and HR.

It belongs to the HAM1 NTPase family. In terms of assembly, homodimer. It depends on Mg(2+) as a cofactor.

It carries out the reaction XTP + H2O = XMP + diphosphate + H(+). It catalyses the reaction dITP + H2O = dIMP + diphosphate + H(+). The enzyme catalyses ITP + H2O = IMP + diphosphate + H(+). In terms of biological role, pyrophosphatase that catalyzes the hydrolysis of nucleoside triphosphates to their monophosphate derivatives, with a high preference for the non-canonical purine nucleotides XTP (xanthosine triphosphate), dITP (deoxyinosine triphosphate) and ITP. Seems to function as a house-cleaning enzyme that removes non-canonical purine nucleotides from the nucleotide pool, thus preventing their incorporation into DNA/RNA and avoiding chromosomal lesions. The polypeptide is dITP/XTP pyrophosphatase (Xylella fastidiosa (strain 9a5c)).